Here is a 122-residue protein sequence, read N- to C-terminus: Small ribosomal subunit protein bS6 (122 aa).

This sequence belongs to the bacterial ribosomal protein bS6 family.

In terms of biological role, binds together with bS18 to 16S ribosomal RNA. This is Small ribosomal subunit protein bS6 from Neisseria meningitidis serogroup C (strain 053442).